The following is a 307-amino-acid chain: F-box protein At2g23160 (307 aa).

The region spanning 2–49 is the F-box domain; it reads NSSSPISIDLIAEILSRVPSKSVARFRCVSKPWASMIRRPYFTELFLT.

The polypeptide is F-box protein At2g23160 (Arabidopsis thaliana (Mouse-ear cress)).